Consider the following 493-residue polypeptide: Galactose-1-phosphate uridylyltransferase (493 aa).

Belongs to the galactose-1-phosphate uridylyltransferase type 2 family.

It is found in the cytoplasm. The enzyme catalyses alpha-D-galactose 1-phosphate + UDP-alpha-D-glucose = alpha-D-glucose 1-phosphate + UDP-alpha-D-galactose. The protein operates within carbohydrate metabolism; galactose metabolism. In Lactococcus lactis subsp. cremoris (strain MG1363), this protein is Galactose-1-phosphate uridylyltransferase.